A 460-amino-acid chain; its full sequence is GTPase Der (460 aa).

EngA-type G domains are found at residues 2–164 (QSII…HEEF) and 196–368 (IRVG…ENFT). Residues 8–15 (GKPNVGKS), 55–59 (DSGGL), 116–119 (NKVD), 202–209 (GRVNVGKS), 249–253 (DTAGI), and 313–316 (NKWD) each bind GTP. In terms of domain architecture, KH-like spans 369-453 (QKIQTSKLNT…PLVIASRKKG (85 aa)).

It belongs to the TRAFAC class TrmE-Era-EngA-EngB-Septin-like GTPase superfamily. EngA (Der) GTPase family. In terms of assembly, associates with the 50S ribosomal subunit.

Its function is as follows. GTPase that plays an essential role in the late steps of ribosome biogenesis. The sequence is that of GTPase Der from Campylobacter jejuni subsp. jejuni serotype O:2 (strain ATCC 700819 / NCTC 11168).